A 505-amino-acid polypeptide reads, in one-letter code: ATP synthase subunit alpha (505 aa).

Gly170–Thr177 provides a ligand contact to ATP.

It belongs to the ATPase alpha/beta chains family. In terms of assembly, F-type ATPases have 2 components, CF(1) - the catalytic core - and CF(0) - the membrane proton channel. CF(1) has five subunits: alpha(3), beta(3), gamma(1), delta(1), epsilon(1). CF(0) has four main subunits: a(1), b(1), b'(1) and c(9-12).

It is found in the cellular thylakoid membrane. The catalysed reaction is ATP + H2O + 4 H(+)(in) = ADP + phosphate + 5 H(+)(out). Produces ATP from ADP in the presence of a proton gradient across the membrane. The alpha chain is a regulatory subunit. In Prochlorococcus marinus (strain MIT 9313), this protein is ATP synthase subunit alpha.